A 197-amino-acid polypeptide reads, in one-letter code: MHVAVFGGTFDPPHNGHLAMCLLARELLHIDKVILSISNNPFKLLRSDHDDHRKNMVGLLASELKKTELPAEVSGWELQKKTPSYTVELLRFLRTEYPDVQLTLLVGEDSYREFPLWKSYEELVLLCRIAVFRRVPPEQIAHREQRLEMIGNVRFIDFDCPISSTTIRADIASGRPVTAKIPSAINRYIIDHRLYRD.

Belongs to the NadD family.

The catalysed reaction is nicotinate beta-D-ribonucleotide + ATP + H(+) = deamido-NAD(+) + diphosphate. It participates in cofactor biosynthesis; NAD(+) biosynthesis; deamido-NAD(+) from nicotinate D-ribonucleotide: step 1/1. Catalyzes the reversible adenylation of nicotinate mononucleotide (NaMN) to nicotinic acid adenine dinucleotide (NaAD). The chain is Probable nicotinate-nucleotide adenylyltransferase from Chlorobium phaeobacteroides (strain DSM 266 / SMG 266 / 2430).